The sequence spans 230 residues: MDEVAIKDEFYRLIPSRFPPVAVYEGLVSEDKIEALVEIENKTNPRLQSEGRLLSAHTDPRAPRLQNWNLAPFKYLNPEGIRFFDGSRPALELADDRQTALAMSVERRQAFLSRTKEAPIGLDMRLLKTPVSGRFIDFRKYPIDLSCEERWRLGGSVPEGADGVIYHPPERPSAICIAVLRGDVLGRTIQTVHYRYVWNGTRISLLYAFDDAGNEIRPEVLGGADDAFAV.

This is an uncharacterized protein from Sinorhizobium fredii (strain NBRC 101917 / NGR234).